A 258-amino-acid chain; its full sequence is GTP cyclohydrolase FolE2 (258 aa).

It belongs to the GTP cyclohydrolase IV family.

The enzyme catalyses GTP + H2O = 7,8-dihydroneopterin 3'-triphosphate + formate + H(+). It functions in the pathway cofactor biosynthesis; 7,8-dihydroneopterin triphosphate biosynthesis; 7,8-dihydroneopterin triphosphate from GTP: step 1/1. Its function is as follows. Converts GTP to 7,8-dihydroneopterin triphosphate. This Geobacter sulfurreducens (strain ATCC 51573 / DSM 12127 / PCA) protein is GTP cyclohydrolase FolE2.